We begin with the raw amino-acid sequence, 388 residues long: MSALEAIKYSRGKLEVLDQLRLPHEHHYDEVSTSEEAFDCIKAMRVRGAPAIAIVAALAASVELHNGSCTATGTEDVIKYIDSRLDYLYESRPTAVDLGNAVRLLKKTVRGVKTEGLTDAEAKEAIIKAFIEASEEILAKDLKTNKSIGAFGAKWLQEQYKITDDSKITVMTHCNTGSLATSGHGTALGIIRTLRDEGLLRHAYCTETRPYNQGSRLTAFELVHEGIPATLVTDSMAAALFRLRKAEENIAAVIVGADRVVRNGDTANKIGTYQLAVLAKHHGIKFMVAAPTTSIDVDTETGDDIEIEQRKREELTQISGAVVNADGSIDTSKSVRVAIADQRIGVWNPGFDVTPHEYIDAIVTEKGTVVKGEDGKFHFEDLMPERFQ.

Aspartate 258 functions as the Proton donor in the catalytic mechanism.

Belongs to the eIF-2B alpha/beta/delta subunits family. MtnA subfamily.

It is found in the cytoplasm. It localises to the nucleus. It catalyses the reaction 5-(methylsulfanyl)-alpha-D-ribose 1-phosphate = 5-(methylsulfanyl)-D-ribulose 1-phosphate. The protein operates within amino-acid biosynthesis; L-methionine biosynthesis via salvage pathway; L-methionine from S-methyl-5-thio-alpha-D-ribose 1-phosphate: step 1/6. Catalyzes the interconversion of methylthioribose-1-phosphate (MTR-1-P) into methylthioribulose-1-phosphate (MTRu-1-P). The chain is Methylthioribose-1-phosphate isomerase (mri-1) from Neurospora crassa (strain ATCC 24698 / 74-OR23-1A / CBS 708.71 / DSM 1257 / FGSC 987).